The chain runs to 121 residues: Parathyroid hormone-related protein (121 aa).

A signal peptide spans 1–14 (VGVFLLSYSVPSCG). Positions 15-24 (RSVEELGRRL) are excised as a propeptide. Positions 47 to 58 (RFFLHHLIAEIH) are important for receptor binding. The segment at 61–121 (EIRATSEVSP…PGKKKKGKPG (61 aa)) is disordered. Residues 66–80 (SEVSPNSKPAPNTKN) show a composition bias toward polar residues. The Nuclear localization signal signature appears at 98–119 (TNKVETYKEQPLKTPGKKKKGK). The segment covering 99 to 108 (NKVETYKEQP) has biased composition (basic and acidic residues). Positions 112-121 (PGKKKKGKPG) are enriched in basic residues.

This sequence belongs to the parathyroid hormone family. In terms of assembly, PTHrP interacts with PTH1R (via N-terminal extracellular domain).

Its subcellular location is the secreted. It is found in the cytoplasm. The protein resides in the nucleus. In terms of biological role, neuroendocrine peptide which is a critical regulator of cellular and organ growth, development, migration, differentiation and survival and of epithelial calcium ion transport. Acts by binding to its receptor, PTH1R, activating G protein-coupled receptor signaling. Regulates endochondral bone development and epithelial-mesenchymal interactions during the formation of the mammary glands and teeth. Required for skeletal homeostasis. Promotes mammary mesenchyme differentiation and bud outgrowth by modulating mesenchymal cell responsiveness to BMPs. Up-regulates BMPR1A expression in the mammary mesenchyme and this increases the sensitivity of these cells to BMPs and allows them to respond to BMP4 in a paracrine and/or autocrine fashion. BMP4 signaling in the mesenchyme, in turn, triggers epithelial outgrowth and augments MSX2 expression, which causes the mammary mesenchyme to inhibit hair follicle formation within the nipple sheath. The polypeptide is Parathyroid hormone-related protein (PTHLH) (Ovis aries (Sheep)).